The following is a 734-amino-acid chain: MSKERGLISPSDFAQLQKYMEYSTKKVSDVLKLFEDGEMAEYLQGDAIGYEGFQQFLKIYLEVDSVPSHLSLALFQSFQTSYCSEETVKRDVVCLSDVSCYFSLLEGGRPEDKLEFTFKLYDTDRNGILDSSEVDRIIIQMMRMAEYLDWDVSELRPILQEMMKEIDYDGSGSVSLAEWLRAGATTVPLLVLLGLEMTLKDNGQHMWRPKRFPRPVYCNLCESSIGLGKQGLSCNLCKYTVHDQCAMKALPCEVSTYAKSRKDIGVQTHVWVRGGCESGRCDRCQKKIRIYHSLVGLHCVWCHLEIHDDCLPAMGHECDCGLLRDHILPPSSIYPSVLASGQERKVSKTSQKTTDDLNLSTSEALRIDPVSNTHPLLVFVNPKSGGKQGERVLWKFQYLLNPRQVFNLLKDGPEPGLRFFREVPDYRILVCGGDGTVGWILETIDKANLPFVPPVAVLPLGTGNDLARCLRWGGGYEGQNLGKILKDLEASKVVHMDRWSVEVIPQQTEEKSDPVPFQIINNYFSIGVDASIAHRFHIMREKYPEKFNSRMKNKLWYFEFATSESIFSTCKKLEESLTVEICGKPLDLSNLSLEGIAVLNIPSTHGGSNLWGDTKRPHGDIHGINQALGAMAKVITDPDILKTCVPDLSDKRLEVVGLEGAIEMGQIYTKLKNAGHRLAKCSEITFHTTKTLPMQIDGEPWMQTPCTIKITHRNQMPMLVGPPPRSSNFFGFLC.

EF-hand domains lie at 109 to 144 and 154 to 189; these read RPEDKLEFTFKLYDTDRNGILDSSEVDRIIIQMMRM and ELRPILQEMMKEIDYDGSGSVSLAEWLRAGATTVPL. Ca(2+)-binding residues include D122, D124, N126, E133, D167, D169, S171, S173, and E178. 2 Phorbol-ester/DAG-type zinc fingers span residues 204-252 and 268-318; these read QHMW…ALPC and THVW…GHEC. The tract at residues 358 to 505 is necessary and sufficient for the diacylglycerol kinase activity; sequence NLSTSEALRI…MDRWSVEVIP (148 aa). Residues 371-505 form the DAGKc domain; it reads SNTHPLLVFV…MDRWSVEVIP (135 aa). K483 carries the post-translational modification N6-acetyllysine.

Belongs to the eukaryotic diacylglycerol kinase family. As to quaternary structure, monomer.

Its subcellular location is the cytoplasm. It is found in the cytosol. The enzyme catalyses a 1,2-diacyl-sn-glycerol + ATP = a 1,2-diacyl-sn-glycero-3-phosphate + ADP + H(+). The catalysed reaction is a 1-O-alkyl-sn-glycerol + ATP = a 1-O-alkyl-sn-glycero-3-phosphate + ADP + H(+). It catalyses the reaction 1-O-alkyl-2-acyl-sn-glycerol + ATP = 1-O-alkyl-2-acyl-sn-glycero-3-phosphate + ADP + H(+). It carries out the reaction 1,2-dihexadecanoyl-sn-glycerol + ATP = 1,2-dihexadecanoyl-sn-glycero-3-phosphate + ADP + H(+). The enzyme catalyses 1-hexadecanoyl-2-(9Z-octadecenoyl)-sn-glycerol + ATP = 1-hexadecanoyl-2-(9Z-octadecenoyl)-sn-glycero-3-phosphate + ADP + H(+). The catalysed reaction is 2-(9Z-octadecenoyl)-glycerol + ATP = 2-(9Z-octadecenoyl)-sn-glycero-3-phosphate + ADP + H(+). It catalyses the reaction 1,2-di-(9Z-octadecenoyl)-sn-glycerol + ATP = 1,2-di-(9Z-octadecenoyl)-sn-glycero-3-phosphate + ADP + H(+). It carries out the reaction 1-octadecanoyl-2-(5Z,8Z,11Z,14Z-eicosatetraenoyl)-sn-glycerol + ATP = 1-octadecanoyl-2-(5Z,8Z,11Z,14Z-eicosatetraenoyl)-sn-glycero-3-phosphate + ADP + H(+). The enzyme catalyses 1,2-didecanoyl-sn-glycerol + ATP = 1,2-didecanoyl-sn-glycero-3-phosphate + ADP + H(+). The catalysed reaction is 1-O-hexadecyl-2-acetyl-sn-glycerol + ATP = 1-O-hexadecyl-2-acetyl-sn-glycero-3-phosphate + ADP + H(+). It catalyses the reaction 1-O-hexadecyl-2-(5Z,8Z,11Z,14Z-eicosatetraenoyl)-sn-glycerol + ATP = 1-O-hexadecyl-2-(5Z,8Z,11Z,14Z-eicosatetraenoyl)-sn-glycero-3-phosphate + ADP + H(+). It carries out the reaction 1-O-hexadecyl-2-(9Z-octadecenoyl)-sn-glycerol + ATP = 1-O-hexadecyl-2-(9Z-octadecenoyl)-sn-glycero-3-phosphate + ADP + H(+). The enzyme catalyses 1-O-hexadecyl-sn-glycerol + ATP = 1-O-hexadecyl-sn-glycero-3-phosphate + ADP + H(+). It functions in the pathway lipid metabolism; glycerolipid metabolism. Stimulated by calcium and phosphatidylserine. Its function is as follows. Diacylglycerol kinase that converts diacylglycerol/DAG into phosphatidic acid/phosphatidate/PA and regulates the respective levels of these two bioactive lipids. Thereby, acts as a central switch between the signaling pathways activated by these second messengers with different cellular targets and opposite effects in numerous biological processes. Also plays an important role in the biosynthesis of complex lipids. Can also phosphorylate 1-alkyl-2-acylglycerol in vitro as efficiently as diacylglycerol provided it contains an arachidonoyl group. Also involved in the production of alkyl-lysophosphatidic acid, another bioactive lipid, through the phosphorylation of 1-alkyl-2-acetyl glycerol. The polypeptide is Diacylglycerol kinase alpha (DGKA) (Sus scrofa (Pig)).